The primary structure comprises 241 residues: Uridylate kinase (241 aa).

15-18 (KLSG) is an ATP binding site. The tract at residues 23–28 (GAEGFG) is involved in allosteric activation by GTP. Glycine 57 lines the UMP pocket. Residues glycine 58 and arginine 62 each contribute to the ATP site. UMP is bound by residues aspartate 77 and 138–145 (TGNPFFTT). ATP is bound by residues threonine 165, tyrosine 171, and aspartate 174.

The protein belongs to the UMP kinase family. As to quaternary structure, homohexamer.

It localises to the cytoplasm. It catalyses the reaction UMP + ATP = UDP + ADP. It participates in pyrimidine metabolism; CTP biosynthesis via de novo pathway; UDP from UMP (UMPK route): step 1/1. With respect to regulation, allosterically activated by GTP. Inhibited by UTP. Its function is as follows. Catalyzes the reversible phosphorylation of UMP to UDP. This Serratia proteamaculans (strain 568) protein is Uridylate kinase.